Reading from the N-terminus, the 177-residue chain is MKLPKEGDFITIQSYKHDGSLHRTWRDTMVLKTTENAIIGVNDHTLVTESDGRRWVTREPAIVYFHKKYWFNIIAMIRDNGTSYYCNVASPYYLDEEALKYIDYDLDVKIFTDGEKRLLDVEEYERHKRKMNYSDDLDYILKEHVKILVDWINNGRGPFSEAYVNIWYKRYVELKNR.

Arg-23 functions as the Proton donor in the catalytic mechanism. Positions 87, 103, 105, 107, 120, and 123 each coordinate Mg(2+).

Belongs to the Ntdp family. The cofactor is Mg(2+).

It carries out the reaction a ribonucleoside 5'-triphosphate + H2O = a ribonucleoside 5'-diphosphate + phosphate + H(+). It catalyses the reaction a ribonucleoside 5'-diphosphate + H2O = a ribonucleoside 5'-phosphate + phosphate + H(+). Its function is as follows. Has nucleoside phosphatase activity towards nucleoside triphosphates and nucleoside diphosphates. This is Nucleoside triphosphate/diphosphate phosphatase from Streptococcus pneumoniae (strain ATCC 700669 / Spain 23F-1).